The primary structure comprises 216 residues: Probable transaldolase (216 aa).

Lys83 (schiff-base intermediate with substrate) is an active-site residue.

It belongs to the transaldolase family. Type 3B subfamily.

Its subcellular location is the cytoplasm. It carries out the reaction D-sedoheptulose 7-phosphate + D-glyceraldehyde 3-phosphate = D-erythrose 4-phosphate + beta-D-fructose 6-phosphate. It functions in the pathway carbohydrate degradation; pentose phosphate pathway; D-glyceraldehyde 3-phosphate and beta-D-fructose 6-phosphate from D-ribose 5-phosphate and D-xylulose 5-phosphate (non-oxidative stage): step 2/3. In terms of biological role, transaldolase is important for the balance of metabolites in the pentose-phosphate pathway. This chain is Probable transaldolase, found in Desulforamulus reducens (strain ATCC BAA-1160 / DSM 100696 / MI-1) (Desulfotomaculum reducens).